We begin with the raw amino-acid sequence, 99 residues long: Bombyxin A-1 homolog (99 aa).

Positions methionine 1–glycine 19 are cleaved as a signal peptide. 3 cysteine pairs are disulfide-bonded: cysteine 27–cysteine 86, cysteine 39–cysteine 99, and cysteine 85–cysteine 90. A propeptide spans threonine 48–glycine 76 (c peptide like).

Belongs to the insulin family. As to quaternary structure, heterodimer of a B chain and an A chain linked by two disulfide bonds.

Its subcellular location is the secreted. Its function is as follows. Brain peptide responsible for activation of prothoracic glands to produce ecdysone in insects. The chain is Bombyxin A-1 homolog (SBXA1) from Samia cynthia (Ailanthus silkmoth).